The following is a 776-amino-acid chain: Reticulon-1 (776 aa).

Disordered regions lie at residues methionine 1–serine 103, isoleucine 136–isoleucine 168, glutamate 204–proline 244, and leucine 285–proline 580. Residues glutamate 204–aspartate 240 show a composition bias toward basic and acidic residues. Phosphoserine is present on serine 327. Positions proline 328–serine 341 are enriched in low complexity. Phosphoserine occurs at positions 350, 352, and 487. Over residues alanine 497–proline 511 the composition is skewed to basic and acidic residues. A Reticulon domain is found at alanine 589–glutamate 776. A run of 2 helical transmembrane segments spans residues isoleucine 603–valine 623 and phenylalanine 705–leucine 725.

In terms of assembly, interacts with NDRG1. Interacts with BACE1. Interacts with TMEM33. In terms of processing, phosphorylated.

It localises to the endoplasmic reticulum membrane. It is found in the golgi apparatus membrane. Its function is as follows. Inhibits amyloid precursor protein processing, probably by blocking BACE1 activity. This Pan troglodytes (Chimpanzee) protein is Reticulon-1 (RTN1).